The primary structure comprises 313 residues: MFENKPDDSPVYLATASHDQTIRLWQARTGRCYFSFRYPDLHVNRLELTPEKGKLVAACNPHIRLFDLRSYNPHIPVRNFVSHTKNVMAVGFQYTGHMMYSGSEDGSVKIWDLRVRECQREFRSVSPVNTVVLHPNQTELISGDQNGNIRVWDLRADLCSCELVPEVGTPIRSLTVMWDGTMVVAANDRGTCYVWRSLCERQTMTEFEPLHKLQAHNSHILKCLLSPGNNRYLATASSDKTVKIWNLDGFKLEKVLTGHERWVWDCDFSMDGEYLVTASSDTTARLWSMRAGKEEMVYQAHRKATVCCTLLRD.

7 WD repeats span residues 1-35, 38-76, 82-121, 123-162, 166-205, 215-255, and 258-297; these read MFEN…CYFS, YPDL…PHIP, SHTK…CQRE, RSVS…CSCE, EVGT…QTMT, AHNS…LEKV, and GHER…EEMV.

This sequence belongs to the WD repeat LST8 family.

Functionally, probable non-functional protein. In Arabidopsis thaliana (Mouse-ear cress), this protein is Non-functional target of rapamycin complex subunit LST8-2.